A 215-amino-acid polypeptide reads, in one-letter code: Phosphatidylserine decarboxylase proenzyme (215 aa).

Ser-184 functions as the Schiff-base intermediate with substrate; via pyruvic acid in the catalytic mechanism. Position 184 is a pyruvic acid (Ser); by autocatalysis (Ser-184).

The protein belongs to the phosphatidylserine decarboxylase family. PSD-A subfamily. As to quaternary structure, heterodimer of a large membrane-associated beta subunit and a small pyruvoyl-containing alpha subunit. Requires pyruvate as cofactor. Post-translationally, is synthesized initially as an inactive proenzyme. Formation of the active enzyme involves a self-maturation process in which the active site pyruvoyl group is generated from an internal serine residue via an autocatalytic post-translational modification. Two non-identical subunits are generated from the proenzyme in this reaction, and the pyruvate is formed at the N-terminus of the alpha chain, which is derived from the carboxyl end of the proenzyme. The post-translation cleavage follows an unusual pathway, termed non-hydrolytic serinolysis, in which the side chain hydroxyl group of the serine supplies its oxygen atom to form the C-terminus of the beta chain, while the remainder of the serine residue undergoes an oxidative deamination to produce ammonia and the pyruvoyl prosthetic group on the alpha chain.

The protein resides in the cell membrane. It catalyses the reaction a 1,2-diacyl-sn-glycero-3-phospho-L-serine + H(+) = a 1,2-diacyl-sn-glycero-3-phosphoethanolamine + CO2. It functions in the pathway phospholipid metabolism; phosphatidylethanolamine biosynthesis; phosphatidylethanolamine from CDP-diacylglycerol: step 2/2. In terms of biological role, catalyzes the formation of phosphatidylethanolamine (PtdEtn) from phosphatidylserine (PtdSer). This is Phosphatidylserine decarboxylase proenzyme from Ralstonia nicotianae (strain ATCC BAA-1114 / GMI1000) (Ralstonia solanacearum).